We begin with the raw amino-acid sequence, 76 residues long: Protein RALF-like 30 (76 aa).

A signal peptide spans 1-22; sequence MKAWVICLMVISIFMMIEPTLA. 2 disulfide bridges follow: cysteine 37–cysteine 46 and cysteine 66–cysteine 72.

Belongs to the plant rapid alkalinization factor (RALF) family.

Its subcellular location is the secreted. Cell signaling peptide that may regulate plant stress, growth, and development. Mediates a rapid alkalinization of extracellular space by mediating a transient increase in the cytoplasmic Ca(2+) concentration leading to a calcium-dependent signaling events through a cell surface receptor and a concomitant activation of some intracellular mitogen-activated protein kinases. This is Protein RALF-like 30 (RALFL30) from Arabidopsis thaliana (Mouse-ear cress).